Consider the following 389-residue polypeptide: MVSVAEIRKAQRAEGPATILAIGTANPANKVEQATYPDFYFKITNSEHKTELKEKFQRMCDKSMIKSRYMYLTEEILKENPSLCEYMAPSLDARQDMVVVEVPRLGKEAAVKAIKEWGQPKSKITHLIFCTTSGVDMPGADYQLTKLLGLRPYVKRYMMYQQGCFAGGTVLRLAKDLAENNKGARVLVVCSEVTAVTFRGPSDTHLDSLVGQALFGDGAAALIVGSDPVPEIEKPIFEMVWTAQTIAPDSEGAIDGHLREAGLTFHLLKDVPGIVSKNIDKALVEAFQPLNISDYNSIFWIAHPGGPAILDQVEQKLALKPEKMKATRDVLSEYGNMSSACVLFILDEMRKKSAQNGLKTTGEGLDWGVLFGFGPGLTIETVVLHSVAI.

C164 is a catalytic residue.

This sequence belongs to the thiolase-like superfamily. Chalcone/stilbene synthases family.

It carries out the reaction (E)-4-coumaroyl-CoA + 3 malonyl-CoA + 3 H(+) = 2',4,4',6'-tetrahydroxychalcone + 3 CO2 + 4 CoA. The protein operates within secondary metabolite biosynthesis; flavonoid biosynthesis. In terms of biological role, the primary product of this enzyme is 4,2',4',6'-tetrahydroxychalcone (also termed naringenin-chalcone or chalcone) which can under specific conditions spontaneously isomerize into naringenin. This is Chalcone synthase 6 (CHS6) from Trifolium subterraneum (Subterranean clover).